A 101-amino-acid polypeptide reads, in one-letter code: NAD(P)H-quinone oxidoreductase subunit 4L, chloroplastic (101 aa).

3 helical membrane-spanning segments follow: residues 2–22 (MLEH…YGLI), 32–52 (MCLE…SDLF), and 61–81 (IFSI…LAIV).

This sequence belongs to the complex I subunit 4L family. As to quaternary structure, NDH is composed of at least 16 different subunits, 5 of which are encoded in the nucleus.

The protein localises to the plastid. The protein resides in the chloroplast thylakoid membrane. It carries out the reaction a plastoquinone + NADH + (n+1) H(+)(in) = a plastoquinol + NAD(+) + n H(+)(out). The catalysed reaction is a plastoquinone + NADPH + (n+1) H(+)(in) = a plastoquinol + NADP(+) + n H(+)(out). Functionally, NDH shuttles electrons from NAD(P)H:plastoquinone, via FMN and iron-sulfur (Fe-S) centers, to quinones in the photosynthetic chain and possibly in a chloroplast respiratory chain. The immediate electron acceptor for the enzyme in this species is believed to be plastoquinone. Couples the redox reaction to proton translocation, and thus conserves the redox energy in a proton gradient. In Nandina domestica (Heavenly bamboo), this protein is NAD(P)H-quinone oxidoreductase subunit 4L, chloroplastic.